The following is a 388-amino-acid chain: MSEQIVTPESSTPVVPNKETKINLLDLNRQQMREFFKNLGEKPFRADQVMKWMYHYCCDNFDEMTDINKVLRGKLKEVAEIRAPEVVEEQRSSDGTIKWAIAVGDQRVETVYIPEDDRATLCVSSQVGCALECKFCSTAQQGFNRNLRVSEIIGQVWRAAKIVGAAKVTGQRPITNVVMMGMGEPLLNLTNVVPAMEIMLDDFGFGLSKRRVTLSTSGVVPALDKLGDMIDVALAISLHAPNDTIRDEIVPINKKYNIETFLGAVRRYLEKSNANQGRVTIEYVMLDHVNDGTEHAHQLAELLKETPCKINLIPWNPFPGAPYGRSSNSRIDRFSKVLMSYGFTTIVRKTRGDDIDAACGQLAGDVIDRTKRTLRKRMQGEVIDIKAI.

The active-site Proton acceptor is the Glu-109. One can recognise a Radical SAM core domain in the interval 115–354 (EDDRATLCVS…TIVRKTRGDD (240 aa)). A disulfide bridge connects residues Cys-122 and Cys-359. Positions 129, 133, and 136 each coordinate [4Fe-4S] cluster. S-adenosyl-L-methionine-binding positions include 183–184 (GE), Ser-215, 237–239 (SLH), and Asn-316. The active-site S-methylcysteine intermediate is Cys-359.

It belongs to the radical SAM superfamily. RlmN family. Requires [4Fe-4S] cluster as cofactor.

It localises to the cytoplasm. It carries out the reaction adenosine(2503) in 23S rRNA + 2 reduced [2Fe-2S]-[ferredoxin] + 2 S-adenosyl-L-methionine = 2-methyladenosine(2503) in 23S rRNA + 5'-deoxyadenosine + L-methionine + 2 oxidized [2Fe-2S]-[ferredoxin] + S-adenosyl-L-homocysteine. The catalysed reaction is adenosine(37) in tRNA + 2 reduced [2Fe-2S]-[ferredoxin] + 2 S-adenosyl-L-methionine = 2-methyladenosine(37) in tRNA + 5'-deoxyadenosine + L-methionine + 2 oxidized [2Fe-2S]-[ferredoxin] + S-adenosyl-L-homocysteine. Specifically methylates position 2 of adenine 2503 in 23S rRNA and position 2 of adenine 37 in tRNAs. m2A2503 modification seems to play a crucial role in the proofreading step occurring at the peptidyl transferase center and thus would serve to optimize ribosomal fidelity. The chain is Dual-specificity RNA methyltransferase RlmN from Salmonella typhimurium (strain LT2 / SGSC1412 / ATCC 700720).